A 128-amino-acid chain; its full sequence is MKRREAREKALQALFQIELNEMSLDQAIKNIMEDEQDDYMEKLVEGVMANKAEIDAIIEPNLDNWRMDRLSKVDLSLLRLSVYEINYLDDVPNRVSLNESIEIAKIYSDEKSSKFINGVLANIAPEDK.

It belongs to the NusB family.

Its function is as follows. Involved in transcription antitermination. Required for transcription of ribosomal RNA (rRNA) genes. Binds specifically to the boxA antiterminator sequence of the ribosomal RNA (rrn) operons. This is Transcription antitermination protein NusB from Listeria welshimeri serovar 6b (strain ATCC 35897 / DSM 20650 / CCUG 15529 / CIP 8149 / NCTC 11857 / SLCC 5334 / V8).